The sequence spans 337 residues: Alcohol dehydrogenase (337 aa).

Positions 38, 61, 92, 95, 98, 106, and 148 each coordinate Zn(2+). NAD(+)-binding positions include 172–177, Asp-195, Lys-200, 260–262, and Arg-331; these read GIGGLG and VGL.

This sequence belongs to the zinc-containing alcohol dehydrogenase family. The cofactor is Zn(2+).

The catalysed reaction is a primary alcohol + NAD(+) = an aldehyde + NADH + H(+). It carries out the reaction a secondary alcohol + NAD(+) = a ketone + NADH + H(+). Its activity is regulated as follows. Substrate inhibition is not observed with any alcohols, and the enzyme-NADH dissociation is not considered to be a rate-limiting step. Functionally, NAD(+)-dependent alcohol dehydrogenase. In Geobacillus stearothermophilus (Bacillus stearothermophilus), this protein is Alcohol dehydrogenase (adhT).